We begin with the raw amino-acid sequence, 119 residues long: FAD-linked sulfhydryl oxidase (119 aa).

The ERV/ALR sulfhydryl oxidase domain maps to 1 to 97 (MLHWGPKFWR…ISWSEYKNIY (97 aa)). Cys44 and Cys47 are disulfide-bonded.

This sequence belongs to the asfivirus B119L family. In terms of assembly, interacts with A151R. FAD serves as cofactor.

The protein resides in the host cytoplasm. It is found in the virion. It carries out the reaction 2 R'C(R)SH + O2 = R'C(R)S-S(R)CR' + H2O2. Its function is as follows. FAD-dependent sulfhydryl oxidase that catalyzes the formation of disulfide bonds in viral proteins produced in the cell cytoplasm. This Ornithodoros (relapsing fever ticks) protein is FAD-linked sulfhydryl oxidase.